A 567-amino-acid chain; its full sequence is Dihydrolipoyl dehydrogenase 2, chloroplastic (567 aa).

Residues 1 to 67 constitute a chloroplast transit peptide; the sequence is MQSVLSLSFS…HIQSRRIEVS (67 aa). FAD contacts are provided by residues 114-122, Lys131, Gly197, and 221-223; these read EGDVVGGTC and TGS. Cys122 and Cys127 are joined by a disulfide. Residues 258–265, Glu281, and Gly354 each bind NAD(+); that span reads GSGYIGLE. FAD is bound by residues Asp400 and 406-409; that span reads MLAH. His536 acts as the Proton acceptor in catalysis.

Belongs to the class-I pyridine nucleotide-disulfide oxidoreductase family. Homodimer. Part of the plastidial pyruvate dehydrogenase complex (PDC) containing multiple copies of three enzymatic components: pyruvate dehydrogenase (E1), dihydrolipoamide acetyltransferase (E2) and lipoamide dehydrogenase (E3). FAD serves as cofactor. In terms of tissue distribution, expressed mainly in flower buds and immature siliques, and to a lesser extent in flowers.

Its subcellular location is the plastid. It localises to the chloroplast stroma. The catalysed reaction is N(6)-[(R)-dihydrolipoyl]-L-lysyl-[protein] + NAD(+) = N(6)-[(R)-lipoyl]-L-lysyl-[protein] + NADH + H(+). In terms of biological role, lipoamide dehydrogenase is a component of the plastidial pyruvate dehydrogenase complex (PDC). The sequence is that of Dihydrolipoyl dehydrogenase 2, chloroplastic (LPD2) from Arabidopsis thaliana (Mouse-ear cress).